Here is a 233-residue protein sequence, read N- to C-terminus: Large ribosomal subunit protein uL1 (233 aa).

The protein belongs to the universal ribosomal protein uL1 family. In terms of assembly, part of the 50S ribosomal subunit.

Binds directly to 23S rRNA. The L1 stalk is quite mobile in the ribosome, and is involved in E site tRNA release. Its function is as follows. Protein L1 is also a translational repressor protein, it controls the translation of the L11 operon by binding to its mRNA. This chain is Large ribosomal subunit protein uL1, found in Pelobacter propionicus (strain DSM 2379 / NBRC 103807 / OttBd1).